A 646-amino-acid polypeptide reads, in one-letter code: Threonine--tRNA ligase (646 aa).

Residues Met1 to Thr63 enclose the TGS domain. The segment at Asp247–Pro544 is catalytic. Zn(2+) contacts are provided by Cys344, His395, and His521.

This sequence belongs to the class-II aminoacyl-tRNA synthetase family. Homodimer. Zn(2+) serves as cofactor.

It localises to the cytoplasm. The enzyme catalyses tRNA(Thr) + L-threonine + ATP = L-threonyl-tRNA(Thr) + AMP + diphosphate + H(+). In terms of biological role, catalyzes the attachment of threonine to tRNA(Thr) in a two-step reaction: L-threonine is first activated by ATP to form Thr-AMP and then transferred to the acceptor end of tRNA(Thr). Also edits incorrectly charged L-seryl-tRNA(Thr). The chain is Threonine--tRNA ligase from Cereibacter sphaeroides (strain ATCC 17029 / ATH 2.4.9) (Rhodobacter sphaeroides).